Consider the following 354-residue polypeptide: UPF0283 membrane protein Meso_1416 (354 aa).

A disordered region spans residues 1–28; that stretch reads MSEPRRPAAFRIEPAPSPSPEATREDVR. 2 helical membrane passes run 71-91 and 105-125; these read LGAV…GLWA and LGWL…AIVV.

The protein belongs to the UPF0283 family.

It is found in the cell inner membrane. The polypeptide is UPF0283 membrane protein Meso_1416 (Chelativorans sp. (strain BNC1)).